Consider the following 100-residue polypeptide: Urease subunit gamma (100 aa).

It belongs to the urease gamma subunit family. In terms of assembly, heterotrimer of UreA (gamma), UreB (beta) and UreC (alpha) subunits. Three heterotrimers associate to form the active enzyme.

The protein localises to the cytoplasm. The enzyme catalyses urea + 2 H2O + H(+) = hydrogencarbonate + 2 NH4(+). Its pathway is nitrogen metabolism; urea degradation; CO(2) and NH(3) from urea (urease route): step 1/1. The sequence is that of Urease subunit gamma from Verminephrobacter eiseniae (strain EF01-2).